Reading from the N-terminus, the 859-residue chain is DNA mismatch repair protein MutS (859 aa).

612-619 (GPNMGGKS) contributes to the ATP binding site. The disordered stretch occupies residues 797-822 (SKPLAPSATPPSSYAAPSPAAAPAQA).

Belongs to the DNA mismatch repair MutS family.

Its function is as follows. This protein is involved in the repair of mismatches in DNA. It is possible that it carries out the mismatch recognition step. This protein has a weak ATPase activity. This is DNA mismatch repair protein MutS from Alcanivorax borkumensis (strain ATCC 700651 / DSM 11573 / NCIMB 13689 / SK2).